A 184-amino-acid polypeptide reads, in one-letter code: Adenine phosphoribosyltransferase (184 aa).

This sequence belongs to the purine/pyrimidine phosphoribosyltransferase family. In terms of assembly, homodimer.

Its subcellular location is the cytoplasm. The enzyme catalyses AMP + diphosphate = 5-phospho-alpha-D-ribose 1-diphosphate + adenine. Its pathway is purine metabolism; AMP biosynthesis via salvage pathway; AMP from adenine: step 1/1. Catalyzes a salvage reaction resulting in the formation of AMP, that is energically less costly than de novo synthesis. The polypeptide is Adenine phosphoribosyltransferase (Sphingopyxis alaskensis (strain DSM 13593 / LMG 18877 / RB2256) (Sphingomonas alaskensis)).